A 527-amino-acid chain; its full sequence is SusD-like protein P25 (527 aa).

Positions 1–15 are cleaved as a signal peptide; sequence MKIQNIIVYVFLIFS. The N-palmitoyl cysteine moiety is linked to residue cysteine 16. Cysteine 16 carries the S-diacylglycerol cysteine lipid modification.

It belongs to the SusD family.

The protein localises to the cell outer membrane. In terms of biological role, polysaccharide-binding protein probably involved in ulvan degradation. Ulvan is the main polysaccharide component of the Ulvales (green seaweed) cell wall. It is composed of disaccharide building blocks comprising 3-sulfated rhamnose (Rha3S) linked to D-glucuronic acid (GlcA), L-iduronic acid (IduA), or D-xylose (Xyl). The SusD-like protein may mediate ulvan oligomer-binding before transport in the periplasm for further degradation. In Formosa agariphila (strain DSM 15362 / KCTC 12365 / LMG 23005 / KMM 3901 / M-2Alg 35-1), this protein is SusD-like protein P25.